Here is a 557-residue protein sequence, read N- to C-terminus: MRYNTAKLLVYDAEQVSKGIEKIQEHVENTEKYLSLYESTVINETDRIQLQELKALWEKYKSLVDKEVELVKSGKTEEARQLLLSDIDDIGDTLRDYFEAFVEYNTTAAKEKVDENKQVASTASTVMIVVIFVGILIAIALGVFISRIISKPIGQMVEAADRLALGDVEVDVKAETRDEIGKLAESFKRMIENIREQAYVVERIAAGDMTVDVRVKSDKDLLGKKLKEMVDTNNEVLSNINEVAAQVAAGAKQVSDSSMQLSQGATEQASSIEELTASLEQVANQTQLSAKNANQANELAEVAKNNAEQGNKQMAEMLNAMEEINNSSSNISRIIKVIDEIAFQTNILALNAAVEAARAGQHGKGFAVVAEEVRNLAARSANAAKETTELIEGTIKRTENGTKIARETAEALNKIVEGISKAATLVNDIAVASNEQAAAITQINQGIAQVSQVVQTNSATSEESAAASEELSSQAELLKRSIAKFKLKNMGKMTSNRYKEVSPEIMRMLEDYTENKQPKSYSKEENGEYSDGKETAEKDVGGLKQKILLSDSEFGKY.

Residues 122–145 traverse the membrane as a helical segment; that stretch reads TASTVMIVVIFVGILIAIALGVFI. In terms of domain architecture, HAMP spans 147–199; sequence RIISKPIGQMVEAADRLALGDVEVDVKAETRDEIGKLAESFKRMIENIREQAY. In terms of domain architecture, Methyl-accepting transducer spans 243-472; it reads VAAQVAAGAK…ESAAASEELS (230 aa). Glutamine 268 carries the glutamate methyl ester (Gln) modification. Glutamate 274 carries the post-translational modification Glutamate methyl ester (Glu). The residue at position 281 (glutamine 281) is a Glutamate methyl ester (Gln). Glutamate methyl ester (Glu) is present on glutamate 463. Residues 511-541 are compositionally biased toward basic and acidic residues; sequence DYTENKQPKSYSKEENGEYSDGKETAEKDVG. Residues 511 to 542 are disordered; it reads DYTENKQPKSYSKEENGEYSDGKETAEKDVGG.

Belongs to the methyl-accepting chemotaxis (MCP) protein family.

It localises to the cell membrane. Its function is as follows. May bind attractants or detect changes in the extracellular concentration of soluble sugars. The chain is Putative sensory transducer protein from Acetivibrio thermocellus (strain ATCC 27405 / DSM 1237 / JCM 9322 / NBRC 103400 / NCIMB 10682 / NRRL B-4536 / VPI 7372) (Clostridium thermocellum).